The following is a 384-amino-acid chain: UDP-N-acetylglucosamine--N-acetylmuramyl-(pentapeptide) pyrophosphoryl-undecaprenol N-acetylglucosamine transferase (384 aa).

Residues 22–24, R179, S209, and Q312 each bind UDP-N-acetyl-alpha-D-glucosamine; that span reads TGG.

This sequence belongs to the glycosyltransferase 28 family. MurG subfamily.

The protein resides in the cell inner membrane. The catalysed reaction is di-trans,octa-cis-undecaprenyl diphospho-N-acetyl-alpha-D-muramoyl-L-alanyl-D-glutamyl-meso-2,6-diaminopimeloyl-D-alanyl-D-alanine + UDP-N-acetyl-alpha-D-glucosamine = di-trans,octa-cis-undecaprenyl diphospho-[N-acetyl-alpha-D-glucosaminyl-(1-&gt;4)]-N-acetyl-alpha-D-muramoyl-L-alanyl-D-glutamyl-meso-2,6-diaminopimeloyl-D-alanyl-D-alanine + UDP + H(+). Its pathway is cell wall biogenesis; peptidoglycan biosynthesis. Cell wall formation. Catalyzes the transfer of a GlcNAc subunit on undecaprenyl-pyrophosphoryl-MurNAc-pentapeptide (lipid intermediate I) to form undecaprenyl-pyrophosphoryl-MurNAc-(pentapeptide)GlcNAc (lipid intermediate II). The polypeptide is UDP-N-acetylglucosamine--N-acetylmuramyl-(pentapeptide) pyrophosphoryl-undecaprenol N-acetylglucosamine transferase (Treponema pallidum (strain Nichols)).